We begin with the raw amino-acid sequence, 124 residues long: WAP four-disulfide core domain protein 2 (124 aa).

The signal sequence occupies residues 1 to 27; it reads MPACRPGPLAGALLLGLLLLGLPRVPG. WAP domains lie at 29–73 and 74–123; these read EVEK…CHLP and NEKE…VTPI. 8 disulfides stabilise this stretch: C36–C62, C45–C66, C49–C61, C55–C70, C80–C110, C93–C114, C97–C109, and C103–C119. The N-linked (GlcNAc...) asparagine glycan is linked to N44.

As to quaternary structure, homotrimer; disulfide-linked. As to expression, epididymis. Highest levels are found in the caput and proximal cauda regions. Lower levels in the distal cauda. Not detected in the efferent ducts.

It localises to the secreted. Broad range protease inhibitor. Possible function in sperm maturation. The chain is WAP four-disulfide core domain protein 2 (WFDC2) from Canis lupus familiaris (Dog).